The following is a 117-amino-acid chain: Protein Aeq5-like2 (117 aa).

At 1–36 (MLVNARAIRQSIGIVVAQCRRDLESNRTLDYRTRMR) the chain is on the cytoplasmic side. Residues 37-56 (TSLILVAMVMVSVLLPYTYG) traverse the membrane as a helical segment. Residues 57–117 (SSCDSFCTEQ…RFTKEPTEES (61 aa)) lie on the Extracellular side of the membrane. Disulfide bonds link Cys-59/Cys-94, Cys-63/Cys-90, Cys-70/Cys-83, and Cys-74/Cys-80.

In terms of processing, the mature peptide may be cleaved at a dibasic residue site and be shorter than the sequence shown (possibly residues 1-94). Expressed in endodermal ganglion neurons, apparently bipolar and following mesentery folds (observed in both planulae and primary polyps). It not expressed in nematocytes.

It is found in the membrane. This chain is Protein Aeq5-like2, found in Nematostella vectensis (Starlet sea anemone).